A 419-amino-acid polypeptide reads, in one-letter code: Tyrosine--tRNA ligase (419 aa).

An L-tyrosine-binding site is contributed by Tyr-34. The 'HIGH' region signature appears at 39-48 (PTADSLHIGN). L-tyrosine is bound by residues Tyr-169 and Gln-173. Residues 230–234 (KFGKT) carry the 'KMSKS' region motif. Lys-233 is a binding site for ATP. The S4 RNA-binding domain occupies 352–419 (VPLVELLVSA…KKKYYLIRYA (68 aa)).

Belongs to the class-I aminoacyl-tRNA synthetase family. TyrS type 1 subfamily. In terms of assembly, homodimer.

It localises to the cytoplasm. The enzyme catalyses tRNA(Tyr) + L-tyrosine + ATP = L-tyrosyl-tRNA(Tyr) + AMP + diphosphate + H(+). In terms of biological role, catalyzes the attachment of tyrosine to tRNA(Tyr) in a two-step reaction: tyrosine is first activated by ATP to form Tyr-AMP and then transferred to the acceptor end of tRNA(Tyr). The sequence is that of Tyrosine--tRNA ligase from Geobacillus kaustophilus (strain HTA426).